Consider the following 432-residue polypeptide: D-amino acid dehydrogenase (432 aa).

Residue 3–17 (VVILGSGVVGVASAW) participates in FAD binding.

The protein belongs to the DadA oxidoreductase family. It depends on FAD as a cofactor.

The enzyme catalyses a D-alpha-amino acid + A + H2O = a 2-oxocarboxylate + AH2 + NH4(+). Its pathway is amino-acid degradation; D-alanine degradation; NH(3) and pyruvate from D-alanine: step 1/1. Oxidative deamination of D-amino acids. This Shigella sonnei (strain Ss046) protein is D-amino acid dehydrogenase.